Consider the following 447-residue polypeptide: Cysteine--tRNA ligase (447 aa).

Cys28 contacts Zn(2+). The 'HIGH' region motif lies at 30–40 (PTVYNYIHIGN). Positions 211, 236, and 240 each coordinate Zn(2+). A 'KMSKS' region motif is present at residues 268-272 (KMSKS). Residue Lys271 participates in ATP binding.

This sequence belongs to the class-I aminoacyl-tRNA synthetase family. As to quaternary structure, monomer. It depends on Zn(2+) as a cofactor.

Its subcellular location is the cytoplasm. The enzyme catalyses tRNA(Cys) + L-cysteine + ATP = L-cysteinyl-tRNA(Cys) + AMP + diphosphate. This is Cysteine--tRNA ligase from Streptococcus pyogenes serotype M18 (strain MGAS8232).